Reading from the N-terminus, the 291-residue chain is uncharacterized protein (291 aa).

2 consecutive transmembrane segments (helical) span residues 42-62 (IFFFLILILVFVLWILVRALW) and 86-106 (TIFPCFISIFIVEPSFALALD).

Belongs to the cytochrome c oxidase subunit 2 family.

It localises to the mitochondrion membrane. This is an uncharacterized protein from Arabidopsis thaliana (Mouse-ear cress).